Here is a 70-residue protein sequence, read N- to C-terminus: DNA-directed RNA polymerase subunit epsilon (70 aa).

It belongs to the RNA polymerase subunit epsilon family. RNAP is composed of a core of 2 alpha, a beta and a beta' subunit. The core is associated with a delta subunit, and at least one of epsilon or omega. When a sigma factor is associated with the core the holoenzyme is formed, which can initiate transcription.

It catalyses the reaction RNA(n) + a ribonucleoside 5'-triphosphate = RNA(n+1) + diphosphate. In terms of biological role, a non-essential component of RNA polymerase (RNAP). This Bacillus cereus (strain ATCC 14579 / DSM 31 / CCUG 7414 / JCM 2152 / NBRC 15305 / NCIMB 9373 / NCTC 2599 / NRRL B-3711) protein is DNA-directed RNA polymerase subunit epsilon.